The sequence spans 501 residues: Group 3 secretory phospholipase A2 (501 aa).

The N-terminal stretch at 1–19 (MGVLVVLLGVLSFLGRTLG) is a signal peptide. Residues 119–139 (RGPAESPAGTREKRAAGQNGV) form a disordered region. Positions 150–291 (GWTVPGTLWC…SWSSPATSLT (142 aa)) are phospholipase A2-like. Ca(2+) is bound by residues Trp158, Gly160, and Gly162. Disulfide bonds link Cys159/Cys181, Cys180/Cys220, Cys187/Cys213, and Cys211/Cys244. N-linked (GlcNAc...) asparagine glycosylation is present at Asn167. The active site involves His184. Asp185 is a Ca(2+) binding site. Asp214 is an active-site residue. Asn280 carries N-linked (GlcNAc...) asparagine glycosylation. Over residues 284 to 298 (SSPATSLTPSPQNPA) the composition is skewed to polar residues. The segment at 284–339 (SSPATSLTPSPQNPALSRPQPMQHPQQWPSEWKESKSPSKTNATALQAPVASPGSD) is disordered. 2 N-linked (GlcNAc...) asparagine glycosylation sites follow: Asn325 and Asn403.

Belongs to the phospholipase A2 family. Ca(2+) is required as a cofactor. In terms of processing, N-glycosylation does not affect the catalytic activity, but is required for proper secretion. A nonglycosylated form was observed in several cell types. In several cell types, the N- and C-termini are cleaved off.

The protein resides in the secreted. It localises to the cell membrane. It is found in the cytoplasm. Its subcellular location is the cytoskeleton. The protein localises to the microtubule organizing center. The protein resides in the centrosome. It localises to the centriole. It is found in the recycling endosome. It catalyses the reaction a 1,2-diacyl-sn-glycero-3-phosphocholine + H2O = a 1-acyl-sn-glycero-3-phosphocholine + a fatty acid + H(+). The enzyme catalyses 1-hexadecanoyl-2-(9Z,12Z-octadecadienoyl)-sn-glycero-3-phosphocholine + H2O = (9Z,12Z)-octadecadienoate + 1-hexadecanoyl-sn-glycero-3-phosphocholine + H(+). It carries out the reaction 1-hexadecanoyl-2-(5Z,8Z,11Z,14Z-eicosatetraenoyl)-sn-glycero-3-phosphocholine + H2O = 1-hexadecanoyl-sn-glycero-3-phosphocholine + (5Z,8Z,11Z,14Z)-eicosatetraenoate + H(+). The catalysed reaction is 1-hexadecanoyl-2-(9Z,12Z-octadecadienoyl)-sn-glycero-3-phosphoethanolamine + H2O = 1-hexadecanoyl-sn-glycero-3-phosphoethanolamine + (9Z,12Z)-octadecadienoate + H(+). It catalyses the reaction 1-hexadecanoyl-2-(5Z,8Z,11Z,14Z-eicosatetraenoyl)-sn-glycero-3-phosphoethanolamine + H2O = 1-hexadecanoyl-sn-glycero-3-phosphoethanolamine + (5Z,8Z,11Z,14Z)-eicosatetraenoate + H(+). In terms of biological role, secretory calcium-dependent phospholipase A2 that primarily targets extracellular phospholipids. Hydrolyzes the ester bond of the fatty acyl group attached at sn-2 position of phospholipids without apparent head group selectivity. Contributes to phospholipid remodeling of low-density lipoprotein (LDL) and high-density lipoprotein (HDL) particles. Hydrolyzes LDL phospholipids releasing unsaturated fatty acids that regulate macrophage differentiation toward foam cells. May act in an autocrine and paracrine manner. Secreted by immature mast cells, acts on nearby fibroblasts upstream to PTDGS to synthesize prostaglandin D2 (PGD2), which in turn promotes mast cell maturation and degranulation via PTGDR. Secreted by epididymal epithelium, acts on immature sperm cells within the duct, modulating the degree of unsaturation of the fatty acyl components of phosphatidylcholines required for acrosome assembly and sperm cell motility. Facilitates the replacement of fatty acyl chains in phosphatidylcholines in sperm membranes from omega-6 and omega-9 to omega-3 polyunsaturated fatty acids (PUFAs). Coupled to lipoxygenase pathway, may process omega-6 PUFAs to generate oxygenated lipid mediators in the male reproductive tract. At pericentrosomal preciliary compartment, negatively regulates ciliogenesis likely by regulating endocytotic recycling of ciliary membrane protein. Coupled to cyclooxygenase pathway provides arachidonate to generate prostaglandin E2 (PGE2), a potent immunomodulatory lipid in inflammation and tumorigenesis. At colonic epithelial barrier, preferentially hydrolyzes phospholipids having arachidonate and docosahexaenoate at sn-2 position, contributing to the generation of oxygenated metabolites involved in colonic stem cell homeostasis. Releases C16:0 and C18:0 lysophosphatidylcholine subclasses from neuron plasma membranes and promotes neurite outgrowth and neuron survival. This Bos taurus (Bovine) protein is Group 3 secretory phospholipase A2 (PLA2G3).